The chain runs to 579 residues: Arginine--tRNA ligase (579 aa).

A 'HIGH' region motif is present at residues 136-146 (ANPTGPLHIGH).

This sequence belongs to the class-I aminoacyl-tRNA synthetase family. In terms of assembly, monomer.

The protein localises to the cytoplasm. The catalysed reaction is tRNA(Arg) + L-arginine + ATP = L-arginyl-tRNA(Arg) + AMP + diphosphate. The polypeptide is Arginine--tRNA ligase (Anaplasma marginale (strain St. Maries)).